The sequence spans 931 residues: Isoleucine--tRNA ligase (931 aa).

The short motif at 58–68 (PYANGHLHCGH) is the 'HIGH' region element. L-isoleucyl-5'-AMP is bound at residue Glu-559. The 'KMSKS' region motif lies at 600–604 (KLSKS). Position 603 (Lys-603) interacts with ATP. Cys-894, Cys-897, Cys-914, and Cys-917 together coordinate Zn(2+).

Belongs to the class-I aminoacyl-tRNA synthetase family. IleS type 1 subfamily. Monomer. Zn(2+) serves as cofactor.

The protein localises to the cytoplasm. The enzyme catalyses tRNA(Ile) + L-isoleucine + ATP = L-isoleucyl-tRNA(Ile) + AMP + diphosphate. In terms of biological role, catalyzes the attachment of isoleucine to tRNA(Ile). As IleRS can inadvertently accommodate and process structurally similar amino acids such as valine, to avoid such errors it has two additional distinct tRNA(Ile)-dependent editing activities. One activity is designated as 'pretransfer' editing and involves the hydrolysis of activated Val-AMP. The other activity is designated 'posttransfer' editing and involves deacylation of mischarged Val-tRNA(Ile). The protein is Isoleucine--tRNA ligase of Legionella pneumophila (strain Corby).